A 430-amino-acid polypeptide reads, in one-letter code: Glutamate-1-semialdehyde 2,1-aminomutase (430 aa).

Residue Lys265 is modified to N6-(pyridoxal phosphate)lysine.

Belongs to the class-III pyridoxal-phosphate-dependent aminotransferase family. HemL subfamily. Homodimer. Requires pyridoxal 5'-phosphate as cofactor.

It is found in the cytoplasm. It carries out the reaction (S)-4-amino-5-oxopentanoate = 5-aminolevulinate. It participates in porphyrin-containing compound metabolism; protoporphyrin-IX biosynthesis; 5-aminolevulinate from L-glutamyl-tRNA(Glu): step 2/2. In Helicobacter pylori (strain J99 / ATCC 700824) (Campylobacter pylori J99), this protein is Glutamate-1-semialdehyde 2,1-aminomutase (hemL).